The primary structure comprises 314 residues: 4-hydroxy-3-methylbut-2-enyl diphosphate reductase (314 aa).

C12 is a [4Fe-4S] cluster binding site. Residues H41 and H74 each coordinate (2E)-4-hydroxy-3-methylbut-2-enyl diphosphate. Dimethylallyl diphosphate contacts are provided by H41 and H74. Isopentenyl diphosphate contacts are provided by H41 and H74. C96 lines the [4Fe-4S] cluster pocket. H124 provides a ligand contact to (2E)-4-hydroxy-3-methylbut-2-enyl diphosphate. Dimethylallyl diphosphate is bound at residue H124. Residue H124 participates in isopentenyl diphosphate binding. Catalysis depends on E126, which acts as the Proton donor. Residue T168 participates in (2E)-4-hydroxy-3-methylbut-2-enyl diphosphate binding. C198 is a binding site for [4Fe-4S] cluster. (2E)-4-hydroxy-3-methylbut-2-enyl diphosphate-binding residues include S226, S227, N228, and S270. 4 residues coordinate dimethylallyl diphosphate: S226, S227, N228, and S270. Residues S226, S227, N228, and S270 each coordinate isopentenyl diphosphate.

It belongs to the IspH family. [4Fe-4S] cluster is required as a cofactor.

The catalysed reaction is isopentenyl diphosphate + 2 oxidized [2Fe-2S]-[ferredoxin] + H2O = (2E)-4-hydroxy-3-methylbut-2-enyl diphosphate + 2 reduced [2Fe-2S]-[ferredoxin] + 2 H(+). The enzyme catalyses dimethylallyl diphosphate + 2 oxidized [2Fe-2S]-[ferredoxin] + H2O = (2E)-4-hydroxy-3-methylbut-2-enyl diphosphate + 2 reduced [2Fe-2S]-[ferredoxin] + 2 H(+). It functions in the pathway isoprenoid biosynthesis; dimethylallyl diphosphate biosynthesis; dimethylallyl diphosphate from (2E)-4-hydroxy-3-methylbutenyl diphosphate: step 1/1. It participates in isoprenoid biosynthesis; isopentenyl diphosphate biosynthesis via DXP pathway; isopentenyl diphosphate from 1-deoxy-D-xylulose 5-phosphate: step 6/6. Catalyzes the conversion of 1-hydroxy-2-methyl-2-(E)-butenyl 4-diphosphate (HMBPP) into a mixture of isopentenyl diphosphate (IPP) and dimethylallyl diphosphate (DMAPP). Acts in the terminal step of the DOXP/MEP pathway for isoprenoid precursor biosynthesis. This is 4-hydroxy-3-methylbut-2-enyl diphosphate reductase from Pseudomonas aeruginosa (strain ATCC 15692 / DSM 22644 / CIP 104116 / JCM 14847 / LMG 12228 / 1C / PRS 101 / PAO1).